The primary structure comprises 82 residues: Putative ribonuclease VapC34 (82 aa).

Asp-4 lines the Mg(2+) pocket.

This sequence belongs to the PINc/VapC protein family. Mg(2+) serves as cofactor.

Toxic component of a possible type II toxin-antitoxin (TA) system. A putative RNase. Its cognate antitoxin is VapB34. The polypeptide is Putative ribonuclease VapC34 (vapC34) (Mycobacterium tuberculosis (strain CDC 1551 / Oshkosh)).